The chain runs to 239 residues: Ribitol-5-phosphate cytidylyltransferase (239 aa).

CTP is bound by residues 7–10 and 80–86; these read FAGG and GETGQMS.

Belongs to the IspD/TarI cytidylyltransferase family. TarI subfamily.

The catalysed reaction is D-ribitol 5-phosphate + CTP + H(+) = CDP-L-ribitol + diphosphate. It functions in the pathway cell wall biogenesis; poly(ribitol phosphate) teichoic acid biosynthesis. In terms of biological role, catalyzes the transfer of the cytidylyl group of CTP to D-ribitol 5-phosphate. In Streptococcus agalactiae serotype Ia (strain ATCC 27591 / A909 / CDC SS700), this protein is Ribitol-5-phosphate cytidylyltransferase.